The primary structure comprises 341 residues: L-threonine 3-dehydrogenase (341 aa).

C38 contacts Zn(2+). Residues T40 and H43 each act as charge relay system in the active site. H63, E64, C93, C96, C99, and C107 together coordinate Zn(2+). NAD(+)-binding positions include I175, D195, R200, 262-264, and 286-287; these read LGI and IY.

It belongs to the zinc-containing alcohol dehydrogenase family. In terms of assembly, homotetramer. It depends on Zn(2+) as a cofactor.

The protein resides in the cytoplasm. The enzyme catalyses L-threonine + NAD(+) = (2S)-2-amino-3-oxobutanoate + NADH + H(+). Its pathway is amino-acid degradation; L-threonine degradation via oxydo-reductase pathway; glycine from L-threonine: step 1/2. In terms of biological role, catalyzes the NAD(+)-dependent oxidation of L-threonine to 2-amino-3-ketobutyrate. The polypeptide is L-threonine 3-dehydrogenase (Colwellia psychrerythraea (strain 34H / ATCC BAA-681) (Vibrio psychroerythus)).